The chain runs to 699 residues: Elongation factor G (699 aa).

The region spanning 8–288 is the tr-type G domain; it reads EDYRNFGIMA…AVVDYLPSPL (281 aa). Residues 17–24, 86–90, and 140–143 contribute to the GTP site; these read AHIDAGKT, DTPGH, and NKMD.

The protein belongs to the TRAFAC class translation factor GTPase superfamily. Classic translation factor GTPase family. EF-G/EF-2 subfamily.

Its subcellular location is the cytoplasm. Its function is as follows. Catalyzes the GTP-dependent ribosomal translocation step during translation elongation. During this step, the ribosome changes from the pre-translocational (PRE) to the post-translocational (POST) state as the newly formed A-site-bound peptidyl-tRNA and P-site-bound deacylated tRNA move to the P and E sites, respectively. Catalyzes the coordinated movement of the two tRNA molecules, the mRNA and conformational changes in the ribosome. This chain is Elongation factor G, found in Rhizobium etli (strain ATCC 51251 / DSM 11541 / JCM 21823 / NBRC 15573 / CFN 42).